The sequence spans 462 residues: ATP synthase subunit beta 2 (462 aa).

An ATP-binding site is contributed by 151-158; the sequence is GGAGVGKT.

This sequence belongs to the ATPase alpha/beta chains family. As to quaternary structure, F-type ATPases have 2 components, CF(1) - the catalytic core - and CF(0) - the membrane proton channel. CF(1) has five subunits: alpha(3), beta(3), gamma(1), delta(1), epsilon(1). CF(0) has three main subunits: a(1), b(2) and c(9-12). The alpha and beta chains form an alternating ring which encloses part of the gamma chain. CF(1) is attached to CF(0) by a central stalk formed by the gamma and epsilon chains, while a peripheral stalk is formed by the delta and b chains.

It localises to the cell inner membrane. It catalyses the reaction ATP + H2O + 4 H(+)(in) = ADP + phosphate + 5 H(+)(out). Its function is as follows. Produces ATP from ADP in the presence of a proton gradient across the membrane. The catalytic sites are hosted primarily by the beta subunits. This Chlorobaculum tepidum (strain ATCC 49652 / DSM 12025 / NBRC 103806 / TLS) (Chlorobium tepidum) protein is ATP synthase subunit beta 2.